Reading from the N-terminus, the 185-residue chain is Ribosome-recycling factor (185 aa).

Belongs to the RRF family.

It localises to the cytoplasm. Its function is as follows. Responsible for the release of ribosomes from messenger RNA at the termination of protein biosynthesis. May increase the efficiency of translation by recycling ribosomes from one round of translation to another. The sequence is that of Ribosome-recycling factor from Desulforapulum autotrophicum (strain ATCC 43914 / DSM 3382 / VKM B-1955 / HRM2) (Desulfobacterium autotrophicum).